We begin with the raw amino-acid sequence, 239 residues long: Endolytic peptidoglycan transglycosylase RlpA (239 aa).

The signal sequence occupies residues 1 to 25; sequence MTLTRKTLFLLTAAFGTHSLQTASA. The SPOR domain maps to 160–239; it reads VAENKDIFID…GMVRAVLTAG (80 aa).

It belongs to the RlpA family.

Functionally, lytic transglycosylase with a strong preference for naked glycan strands that lack stem peptides. In Neisseria meningitidis serogroup B (strain ATCC BAA-335 / MC58), this protein is Endolytic peptidoglycan transglycosylase RlpA.